Reading from the N-terminus, the 288-residue chain is Probable sulfate transport system permease protein cysT (288 aa).

7 helical membrane passes run Phe28–Leu48, Phe77–Ile97, Ala111–Val131, Ile149–Val169, Phe198–Phe218, Ser227–Phe247, and Ile261–Leu281. Residues Tyr73–Ile276 enclose the ABC transmembrane type-1 domain.

The protein belongs to the binding-protein-dependent transport system permease family. CysTW subfamily.

It localises to the plastid. The protein localises to the chloroplast membrane. Part of the ABC transporter complex cysAWTP (TC 3.A.1.6.1) involved in sulfate/thiosulfate import. Probably responsible for the translocation of the substrate across the membrane. The protein is Probable sulfate transport system permease protein cysT (cysT) of Zygnema circumcarinatum (Green alga).